A 654-amino-acid polypeptide reads, in one-letter code: Translation factor GUF1, mitochondrial (654 aa).

A tr-type G domain is found at 57 to 237 (ENYRNFSIVA…SVIKNIPSPV (181 aa)). GTP is bound by residues 66 to 73 (AHVDHGKS), 130 to 134 (DTPGH), and 184 to 187 (NKID).

Belongs to the TRAFAC class translation factor GTPase superfamily. Classic translation factor GTPase family. LepA subfamily.

It is found in the mitochondrion inner membrane. The catalysed reaction is GTP + H2O = GDP + phosphate + H(+). Promotes mitochondrial protein synthesis. May act as a fidelity factor of the translation reaction, by catalyzing a one-codon backward translocation of tRNAs on improperly translocated ribosomes. Binds to mitochondrial ribosomes in a GTP-dependent manner. The polypeptide is Translation factor GUF1, mitochondrial (Candida albicans (strain SC5314 / ATCC MYA-2876) (Yeast)).